Reading from the N-terminus, the 127-residue chain is Large ribosomal subunit protein bL12 (127 aa).

Residues 93 to 127 form a disordered region; it reads LVDEAPNPVSEGVSREEADDLKAQIEDAGGEVELQ. The segment covering 105-117 has biased composition (basic and acidic residues); it reads VSREEADDLKAQI.

The protein belongs to the bacterial ribosomal protein bL12 family. As to quaternary structure, homodimer. Part of the ribosomal stalk of the 50S ribosomal subunit. Forms a multimeric L10(L12)X complex, where L10 forms an elongated spine to which 2 to 4 L12 dimers bind in a sequential fashion. Binds GTP-bound translation factors.

Forms part of the ribosomal stalk which helps the ribosome interact with GTP-bound translation factors. Is thus essential for accurate translation. In Salinibacter ruber (strain DSM 13855 / M31), this protein is Large ribosomal subunit protein bL12.